An 84-amino-acid chain; its full sequence is Small ribosomal subunit protein uS17 (84 aa).

Belongs to the universal ribosomal protein uS17 family. Part of the 30S ribosomal subunit.

Its function is as follows. One of the primary rRNA binding proteins, it binds specifically to the 5'-end of 16S ribosomal RNA. The sequence is that of Small ribosomal subunit protein uS17 from Clostridium botulinum (strain 657 / Type Ba4).